A 236-amino-acid polypeptide reads, in one-letter code: tRNA (guanine-N(1)-)-methyltransferase (236 aa).

Residues glycine 110 and 129–134 contribute to the S-adenosyl-L-methionine site; that span reads LGDFVL.

The protein belongs to the RNA methyltransferase TrmD family. In terms of assembly, homodimer.

Its subcellular location is the cytoplasm. It carries out the reaction guanosine(37) in tRNA + S-adenosyl-L-methionine = N(1)-methylguanosine(37) in tRNA + S-adenosyl-L-homocysteine + H(+). Specifically methylates guanosine-37 in various tRNAs. The polypeptide is tRNA (guanine-N(1)-)-methyltransferase (Clostridium perfringens (strain SM101 / Type A)).